Consider the following 802-residue polypeptide: Mitogen-activated protein kinase kinase kinase 20 (802 aa).

Serine 2 is subject to N-acetylserine. Residues serine 2, serine 3, and serine 7 each carry the phosphoserine modification. In terms of domain architecture, Protein kinase spans 16–277 (LQFFENCGGG…NLPDQCNSFL (262 aa)). Residues 22-30 (CGGGSFGSV) and lysine 45 each bind ATP. Residue aspartate 133 is the Proton acceptor of the active site. A Phosphothreonine; by autocatalysis modification is found at threonine 161. The residue at position 165 (serine 165) is a Phosphoserine; by autocatalysis. Serine 275 and serine 302 each carry phosphoserine. A leucine-zipper region spans residues 287–308 (IEATLERLKKLERDLSFKEQEL). Positions 339 to 410 (WTEDDVYFWV…KSAIEKLTHD (72 aa)) constitute an SAM domain. Phosphoserine occurs at positions 434, 453, and 567. Threonine 586 carries the phosphothreonine modification. Phosphoserine occurs at positions 587, 593, and 599. The span at 624–642 (YQQITPSINPSRSSSPTQY) shows a compositional bias: polar residues. The interval 624 to 802 (YQQITPSINP…RGNYRGRRNF (179 aa)) is disordered. Position 628 is a phosphothreonine (threonine 628). Phosphoserine occurs at positions 634, 638, 649, 650, and 661. Over residues 643 to 666 (GLSRNFSSLNLSSRDSGFSSLNDS) the composition is skewed to low complexity. Over residues 667 to 678 (SSERGRYSDRSR) the composition is skewed to basic and acidic residues. Residues 670-713 (RGRYSDRSRNKYYRGSVSLNSSPKGRYGGKSQHSTPSRERYSGK) are sensing domain (S). Phosphoserine occurs at positions 685, 720, 727, and 733. Basic and acidic residues predominate over residues 728–741 (PDFKRSPNDHDRRV). The residue at position 744 (threonine 744) is a Phosphothreonine. The segment at 776-802 (RKKTHRQLSAKTSKERTRGNYRGRRNF) is C-terminal domain (CTD).

This sequence belongs to the protein kinase superfamily. STE Ser/Thr protein kinase family. MAP kinase kinase kinase subfamily. In terms of assembly, homodimer. Interacts with ZNF33A. Component of a signaling complex containing at least AKAP13, PKN1, MAPK14, MAP3K20 and MAP2K3. Within this complex, AKAP13 interacts directly with PKN1, which in turn recruits MAPK14, MAP2K3 and MAP3K20. Interacts with EIF2AK4/GCN2; promoting EIF2AK4/GCN2 kinase activity. Interacts with isoform ZAKbeta. As to quaternary structure, interacts with isoform ZAKalpha. It depends on Mg(2+) as a cofactor. In terms of processing, activated by phosphorylation by PKN1, followed by autophosphorylation on Thr-161 and Ser-165. Autophosphorylation in response to ribotoxic stress promotes dissociation from colliding ribosomes and activation.

The protein resides in the cytoplasm. It is found in the nucleus. It carries out the reaction L-seryl-[protein] + ATP = O-phospho-L-seryl-[protein] + ADP + H(+). The catalysed reaction is L-threonyl-[protein] + ATP = O-phospho-L-threonyl-[protein] + ADP + H(+). Activated in response to stress, such as ribosomal stress, osmotic shock and ionizing radiation. Activated by phosphorylation by PKN1, followed by autophosphorylation on Thr-161 and Ser-165. Stress-activated component of a protein kinase signal transduction cascade that promotes programmed cell death in response to various stress, such as ribosomal stress, osmotic shock and ionizing radiation. Acts by catalyzing phosphorylation of MAP kinase kinases, leading to activation of the JNK (MAPK8/JNK1, MAPK9/JNK2 and/or MAPK10/JNK3) and MAP kinase p38 (MAPK11, MAPK12, MAPK13 and/or MAPK14) pathways. Activates JNK through phosphorylation of MAP2K4/MKK4 and MAP2K7/MKK7, and MAP kinase p38 gamma (MAPK12) via phosphorylation of MAP2K3/MKK3 and MAP2K6/MKK6. Involved in stress associated with adrenergic stimulation: contributes to cardiac decompensation during periods of acute cardiac stress. May be involved in regulation of S and G2 cell cycle checkpoint by mediating phosphorylation of CHEK2. In terms of biological role, key component of the stress-activated protein kinase signaling cascade in response to ribotoxic stress or UV-B irradiation. Acts as the proximal sensor of ribosome collisions during the ribotoxic stress response (RSR). Directly binds to the ribosome by inserting its flexible C-terminus into the ribosomal intersubunit space, thereby acting as a sentinel for colliding ribosomes. Upon ribosome collisions, activates either the stress-activated protein kinase signal transduction cascade or the integrated stress response (ISR), leading to programmed cell death or cell survival, respectively. Dangerous levels of ribosome collisions trigger the autophosphorylation and activation of MAP3K20, which dissociates from colliding ribosomes and phosphorylates MAP kinase kinases, leading to activation of the JNK and MAP kinase p38 pathways that promote programmed cell death. Less dangerous levels of ribosome collisions trigger the integrated stress response (ISR): MAP3K20 activates EIF2AK4/GCN2 independently of its protein-kinase activity, promoting EIF2AK4/GCN2-mediated phosphorylation of EIF2S1/eIF-2-alpha. Also acts as a histone kinase by phosphorylating histone H3 at 'Ser-28' (H3S28ph). Its function is as follows. Isoform that lacks the C-terminal region that mediates ribosome-binding: does not act as a sensor of ribosome collisions in response to ribotoxic stress. May act as an antagonist of isoform ZAKalpha: interacts with isoform ZAKalpha, leading to decrease the expression of isoform ZAKalpha. This is Mitogen-activated protein kinase kinase kinase 20 from Mus musculus (Mouse).